Reading from the N-terminus, the 335-residue chain is MPAVLGFEGSANKIGVGVVRDGTVLANPRRTYVTAPGTGFLPGDTARHHRAVILDLLQEALTEAGLTPKDIDCIAYTKGPGMGAPLASVAVVARTVAQLWNKPLLGVNHCIGHIEMGRLITGAVNPTVLYVSGGNTQVISYSEHRYRIFGETIDIAVGNCLDRFARVLKISNDPSPGYNIEQMAKRGKKLVELPYTVKGMDVSFSGILSFIEDAAQRMLATGECTPEDLCFSLQETVFAMLVEITERAMAHCGSKEALIVGGVGCNVRLQEMMATMCQERGAQLFATDERFCIDNGAMIAQAGWEMFQAGHRTPLQDSGITQRYRTDEVEVTWRD.

The a divalent metal cation site is built by His-109, His-113, and Tyr-130. Substrate is bound by residues 130-134 (YVSGG), Asp-162, Gly-177, Glu-181, and Asn-266. Asp-294 is an a divalent metal cation binding site.

Belongs to the KAE1 / TsaD family. In terms of assembly, component of the EKC/KEOPS complex composed of at least GON7, TP53RK, TPRKB, OSGEP and LAGE3; the whole complex dimerizes. Requires a divalent metal cation as cofactor.

The protein resides in the cytoplasm. The protein localises to the nucleus. The enzyme catalyses L-threonylcarbamoyladenylate + adenosine(37) in tRNA = N(6)-L-threonylcarbamoyladenosine(37) in tRNA + AMP + H(+). In terms of biological role, component of the EKC/KEOPS complex that is required for the formation of a threonylcarbamoyl group on adenosine at position 37 (t(6)A37) in tRNAs that read codons beginning with adenine. The complex is probably involved in the transfer of the threonylcarbamoyl moiety of threonylcarbamoyl-AMP (TC-AMP) to the N6 group of A37. OSGEP likely plays a direct catalytic role in this reaction, but requires other protein(s) of the complex to fulfill this activity. In Rattus norvegicus (Rat), this protein is tRNA N6-adenosine threonylcarbamoyltransferase (Osgep).